Here is a 272-residue protein sequence, read N- to C-terminus: Shikimate dehydrogenase (NADP(+)) (272 aa).

Shikimate is bound by residues S14–S16 and T61. The active-site Proton acceptor is the K65. Shikimate is bound at residue D102. Residues G127 to A131, N151 to K156, and L215 contribute to the NADP(+) site. Y217 contacts shikimate. Residue G239 coordinates NADP(+).

The protein belongs to the shikimate dehydrogenase family. As to quaternary structure, homodimer.

It carries out the reaction shikimate + NADP(+) = 3-dehydroshikimate + NADPH + H(+). The protein operates within metabolic intermediate biosynthesis; chorismate biosynthesis; chorismate from D-erythrose 4-phosphate and phosphoenolpyruvate: step 4/7. In terms of biological role, involved in the biosynthesis of the chorismate, which leads to the biosynthesis of aromatic amino acids. Catalyzes the reversible NADPH linked reduction of 3-dehydroshikimate (DHSA) to yield shikimate (SA). In Coxiella burnetii (strain CbuG_Q212) (Coxiella burnetii (strain Q212)), this protein is Shikimate dehydrogenase (NADP(+)).